The following is a 116-amino-acid chain: Nucleoid-associated protein P9215_00191 (116 aa).

The protein belongs to the YbaB/EbfC family. As to quaternary structure, homodimer.

The protein resides in the cytoplasm. It is found in the nucleoid. Functionally, binds to DNA and alters its conformation. May be involved in regulation of gene expression, nucleoid organization and DNA protection. In Prochlorococcus marinus (strain MIT 9215), this protein is Nucleoid-associated protein P9215_00191.